Reading from the N-terminus, the 208-residue chain is ATP-dependent Clp protease proteolytic subunit (208 aa).

The active-site Nucleophile is the S106. The active site involves H131.

This sequence belongs to the peptidase S14 family. Fourteen ClpP subunits assemble into 2 heptameric rings which stack back to back to give a disk-like structure with a central cavity, resembling the structure of eukaryotic proteasomes.

It is found in the cytoplasm. It catalyses the reaction Hydrolysis of proteins to small peptides in the presence of ATP and magnesium. alpha-casein is the usual test substrate. In the absence of ATP, only oligopeptides shorter than five residues are hydrolyzed (such as succinyl-Leu-Tyr-|-NHMec, and Leu-Tyr-Leu-|-Tyr-Trp, in which cleavage of the -Tyr-|-Leu- and -Tyr-|-Trp bonds also occurs).. Its function is as follows. Cleaves peptides in various proteins in a process that requires ATP hydrolysis. Has a chymotrypsin-like activity. Plays a major role in the degradation of misfolded proteins. This is ATP-dependent Clp protease proteolytic subunit from Roseobacter denitrificans (strain ATCC 33942 / OCh 114) (Erythrobacter sp. (strain OCh 114)).